A 357-amino-acid chain; its full sequence is Putative DNA directed RNA polymerase subunit R470 (357 aa).

This sequence belongs to the archaeal Rpo11/eukaryotic RPB11/RPC19 RNA polymerase subunit family.

It is found in the virion. The enzyme catalyses RNA(n) + a ribonucleoside 5'-triphosphate = RNA(n+1) + diphosphate. The sequence is that of Putative DNA directed RNA polymerase subunit R470 from Acanthamoeba polyphaga mimivirus (APMV).